A 167-amino-acid chain; its full sequence is Interferon gamma (167 aa).

A signal peptide spans 1–23 (MNYTSFIFAFQLCIILCSSGYYC). Q24 bears the Pyrrolidone carboxylic acid mark. N39 and N107 each carry an N-linked (GlcNAc...) asparagine glycan.

The protein belongs to the type II (or gamma) interferon family. In terms of assembly, homodimer. Interacts with IFNGR1 (via extracellular domain); this interaction promotes IFNGR1 dimerization. As to expression, released primarily from activated T lymphocytes.

Its subcellular location is the secreted. In terms of biological role, type II interferon produced by immune cells such as T-cells and NK cells that plays crucial roles in antimicrobial, antiviral, and antitumor responses by activating effector immune cells and enhancing antigen presentation. Primarily signals through the JAK-STAT pathway after interaction with its receptor IFNGR1 to affect gene regulation. Upon IFNG binding, IFNGR1 intracellular domain opens out to allow association of downstream signaling components JAK2, JAK1 and STAT1, leading to STAT1 activation, nuclear translocation and transcription of IFNG-regulated genes. Many of the induced genes are transcription factors such as IRF1 that are able to further drive regulation of a next wave of transcription. Plays a role in class I antigen presentation pathway by inducing a replacement of catalytic proteasome subunits with immunoproteasome subunits. In turn, increases the quantity, quality, and repertoire of peptides for class I MHC loading. Increases the efficiency of peptide generation also by inducing the expression of activator PA28 that associates with the proteasome and alters its proteolytic cleavage preference. Up-regulates as well MHC II complexes on the cell surface by promoting expression of several key molecules such as cathepsins B/CTSB, H/CTSH, and L/CTSL. Participates in the regulation of hematopoietic stem cells during development and under homeostatic conditions by affecting their development, quiescence, and differentiation. The protein is Interferon gamma (IFNG) of Felis catus (Cat).